The primary structure comprises 284 residues: RNA polymerase sigma factor RpoH (284 aa).

Positions 53 to 122 are sigma-70 factor domain-2; that stretch reads LILSHLRFVI…IHEYVLRNWR (70 aa). The short motif at 77-80 is the Interaction with polymerase core subunit RpoC element; sequence DLIQ. The sigma-70 factor domain-4 stretch occupies residues 228–280; the sequence is ALLRLDERSRHIIHARWLDKNKKNTLQNIANNYGISAERVRQLEKNAMKKLKL. Residues 253-272 constitute a DNA-binding region (H-T-H motif); it reads LQNIANNYGISAERVRQLEK.

The protein belongs to the sigma-70 factor family. RpoH subfamily. As to quaternary structure, interacts with the RNA polymerase core enzyme.

It localises to the cytoplasm. Functionally, sigma factors are initiation factors that promote the attachment of RNA polymerase to specific initiation sites and are then released. This sigma factor is involved in regulation of expression of heat shock genes. The protein is RNA polymerase sigma factor RpoH of Buchnera aphidicola subsp. Acyrthosiphon pisum (strain APS) (Acyrthosiphon pisum symbiotic bacterium).